A 1267-amino-acid chain; its full sequence is MSSMILTQFRPFIESISGITDQSNDVFEDAAKAFSMFTRSDVYKALDEIPFSDDAMLPIPPTIYTKPSHDSYYYIDALNRVRRKTYQGPDDVYVPNCSIVELLEPHETLTSYGRLSEAIENRAKDGDSQARIATTYGRIAESQARQIKAPLEKFVLALLVSEAGGSLYDPVLQKYDEIPDLSHNCPLWCFREICRHISGPLPDRAPYLYLSAGVFWLMSPRMTSAIPPLLSDLVNLAILQQTAGLDPSLVKLGVQICLHAAASSSYAWFILKTKSIFPQNTLHSMYESLEGGYCPNLEWLEPRSDYKFMYMGVMPLSTKYARSAPSNDKKARELGEKYGLSSVVSELRKRTKTYVKHDFASVRYIRDAMACTSGIFLVRTPTETVLQEYTQSPEIKVPIPQKDWTGPVGEIRILKDTTSSIARYLYRTWYLAAARMAAQPRTWDPLFQAIMRSQYVTARGGSGAALRESLYAINVSLPDFKGLPVKAATKIFQAAQLANLPFSHTSVAILADTSMGLRNQVQRRPRSIMPLNVPQQQVSAPHTLTADYINYHMNLSTTSGSAVIEKVIPLGVYASSPPNQSINIDISACDASITWDFFLSVIMAAIHEGVASGSIGKPFMGVPASIVNDESVVGVRAARPISGMQNMIQHLSKLYKRGFSYRVNDSFSPGNDFTHMTTTFPSGSTATSTEHTANNSTMMETFLTVWGPEHTDDPDVLRLMKSLTIQRNYVCQGDDGLMIIDGNTAGKVNSETIQKMLELISKYGEEFGWKYDIAYDGTAEYLKLYFIFGCRIPNLSRHPIVGKERANSSAEEPWPAILDQIMGIFFNGVHDGLQWQRWIRYSWALCCAFSRQRTMIGESVGYLQYPMWSFVYWGLPLVKVFGSDPWIFSWYMPTGDLGMYSWISLIRPLMTRWMVANGYATDRCSPVFGNADYRRCFNEIKLYQGYYMAQLPRNPTKSGRAAPREVREQFTQALSDYLMQNPELKSRVLRGRSEWEKYGAGIIHNPPSLFDVPHKWYLGAQEAATATREELAEMDETLMRARRHSYSSFSKLLEAYLLVKWRMCEAREPSVDLRLPLCAGIDPLNSDPFLKMVSVGPMLQSTRKYFAQTLFMAKTVSGLDVNAIDSALLRLRTLGADKKALTAQLLMVGLQESEADALAGKIMLQDVSTVQLARVVNLAVPDTWMSLDFDSMFKHHVKLLPKDGRHLNTDIPPRMGWLRAILRFLGAGMVMTATGVAVDIYLEDIHGGGRALGQRFMTWMRQEGRSA.

Residues 555–792 form the RdRp catalytic domain; it reads LSTTSGSAVI…KLYFIFGCRI (238 aa).

Belongs to the reoviridae RNA-directed RNA polymerase family.

It localises to the virion. The catalysed reaction is RNA(n) + a ribonucleoside 5'-triphosphate = RNA(n+1) + diphosphate. In terms of biological role, RNA-directed RNA polymerase that is involved in transcription and genome replication. Following infection, it catalyzes the synthesis of fully conservative plus strands. After core assembly, which consists in recruitment of one capped plus-strand for each genomic segments and polymerase complexes, the polymerase switches mode and catalyzes the synthesis of complementary minus-strands. The protein is RNA-directed RNA polymerase lambda-3 (L1) of Mammalia (T1L).